The sequence spans 1050 residues: Beta-galactosidase (1050 aa).

Residues N110 and D209 each coordinate substrate. D209 contacts Na(+). Mg(2+)-binding residues include E432, H434, and E477. Substrate contacts are provided by residues E477 and E553–H556. The active-site Proton donor is E477. E553 functions as the Nucleophile in the catalytic mechanism. N613 lines the Mg(2+) pocket. 2 residues coordinate Na(+): F617 and N620. Residues N620 and W1023 each contribute to the substrate site.

Belongs to the glycosyl hydrolase 2 family. Homotetramer. Mg(2+) serves as cofactor. Requires Na(+) as cofactor.

The enzyme catalyses Hydrolysis of terminal non-reducing beta-D-galactose residues in beta-D-galactosides.. In Yersinia enterocolitica serotype O:8 / biotype 1B (strain NCTC 13174 / 8081), this protein is Beta-galactosidase.